Reading from the N-terminus, the 440-residue chain is Chromosome partition protein MukF (440 aa).

The leucine-zipper stretch occupies residues 208–236 (LSETSGTLRELQDTLEAAGDKLQANLLRI).

The protein belongs to the MukF family. In terms of assembly, interacts, and probably forms a ternary complex, with MukE and MukB via its C-terminal region. The complex formation is stimulated by calcium or magnesium. It is required for an interaction between MukE and MukB.

It localises to the cytoplasm. The protein resides in the nucleoid. Its function is as follows. Involved in chromosome condensation, segregation and cell cycle progression. May participate in facilitating chromosome segregation by condensation DNA from both sides of a centrally located replisome during cell division. Not required for mini-F plasmid partitioning. Probably acts via its interaction with MukB and MukE. Overexpression results in anucleate cells. It has a calcium binding activity. The polypeptide is Chromosome partition protein MukF (Salmonella gallinarum (strain 287/91 / NCTC 13346)).